We begin with the raw amino-acid sequence, 816 residues long: Neuroligin-4, X-linked (816 aa).

Residues 1–41 (MSRPQGLLWLPLLFTPVCVMLNSNVLLWLTALAIKFTLIDS) form the signal peptide. Over 42 to 676 (QAQYPVVNTN…TKRDYSTELS (635 aa)) the chain is Extracellular. Residue Asn-102 is glycosylated (N-linked (GlcNAc...) asparagine). Cystine bridges form between Cys-110-Cys-146 and Cys-306-Cys-317. Residues 359–364 (QGEFLN) are interaction with NRXN1. Cys-476 and Cys-510 are disulfide-bonded. Residue Asn-511 is glycosylated (N-linked (GlcNAc...) asparagine). A disordered region spans residues 636–659 (TKRPAITPANNPKHSKDPHKTGPE). Residues 649–658 (HSKDPHKTGP) are compositionally biased toward basic and acidic residues. The chain crosses the membrane as a helical span at residues 677–697 (VTIAVGASLLFLNILAFAALY). Residues 698–816 (YKKDKRRHET…LPHGHSTTRV (119 aa)) are Cytoplasmic-facing. Ser-712 carries the post-translational modification Phosphoserine.

The protein belongs to the type-B carboxylesterase/lipase family. Homodimer. Interacts with NRXN1 in a calcium-dependent manner. Interaction with neurexins is mediated by heparan sulfate glycan modification on neurexin. Interacts through its C-terminus with DLG4/PSD-95 third PDZ domain. In terms of tissue distribution, expressed at highest levels in heart. Expressed at lower levels in liver, skeletal muscle and pancreas and at very low levels in brain.

The protein resides in the cell membrane. The protein localises to the postsynaptic density membrane. Cell surface protein involved in cell-cell-interactions via its interactions with neurexin family members. This chain is Neuroligin-4, X-linked (NLGN4X), found in Homo sapiens (Human).